We begin with the raw amino-acid sequence, 168 residues long: G/U mismatch-specific DNA glycosylase (168 aa).

The protein belongs to the uracil-DNA glycosylase (UDG) superfamily. TDG/mug family. As to quaternary structure, binds DNA as a monomer.

It is found in the cytoplasm. It catalyses the reaction Specifically hydrolyzes mismatched double-stranded DNA and polynucleotides, releasing free uracil.. Excises ethenocytosine and uracil, which can arise by alkylation or deamination of cytosine, respectively, from the corresponding mispairs with guanine in ds-DNA. It is capable of hydrolyzing the carbon-nitrogen bond between the sugar-phosphate backbone of the DNA and the mispaired base. The complementary strand guanine functions in substrate recognition. Required for DNA damage lesion repair in stationary-phase cells. The polypeptide is G/U mismatch-specific DNA glycosylase (Citrobacter koseri (strain ATCC BAA-895 / CDC 4225-83 / SGSC4696)).